The chain runs to 552 residues: MKAKKKLGVGLSRQERQVLVIGEIIQELLKAHEAKKDVNLNRMKSLVASKYGLDSSPRLVDIIAAVPQDAKKILLPKLRAKPIRTASGIAVVAVMCKPHRCPHINMTGNICVYCPGGPDSDFEYSTQSYTGYEPTSMRAIRSRYDPFLQTRHRVEQLKQLGHSVDKVEFIVMGGTFMCLPEEYRDYFIRNLHDALSGHSSANVAEAVRYSEKSRTKCIGITIETRPDYCLKRHISDMLSYGCTRLEIGVQSVYEDVARDTNRGHTVRAVCESFQLGKDAGYKIVTHMMPDLPNVDFERDIEQFIEYFENPAFRSDGLKIYPTLVIRGTGLYELWKTGRYKSYPPSMLVDLVAKILALVPPWTRVYRVQRDIPMPLVSSGVEHGNLRELALARMKDLGTTCRDVRTREVGIQEIHNKVRPYEIELIRRDYVANGGWETFLSYEDPEQDILVGLLRLRKCSPDTFRPELKGECSIVRELHVYGSVVPVNARDPTKFQHQGFGMLLMEEAERIAREEHGSTKLAVISGVGTRNYYRKMGYQLDGPYMSKSIEENN.

Residues 84–374 enclose the Radical SAM core domain; it reads RTASGIAVVA…YRVQRDIPMP (291 aa). The [4Fe-4S] cluster site is built by C101, C111, and C114. Acetyl-CoA contacts are provided by residues K166, 476 to 479, 499 to 501, and Y532; these read ELHV and FGM. One can recognise an N-acetyltransferase domain in the interval 398–552; it reads TTCRDVRTRE…YMSKSIEENN (155 aa).

This sequence belongs to the ELP3 family. As to quaternary structure, component of the elongator complex composed of Elp1, Elp2, Elp3, Elp4, Elp5 and Elp6. The elongator complex associates with and stabilizes microtubules; efficient interaction requires the full complex. It depends on [4Fe-4S] cluster as a cofactor.

It localises to the cytoplasm. The protein localises to the nucleus. It is found in the cytoskeleton. Its subcellular location is the spindle. It catalyses the reaction uridine(34) in tRNA + acetyl-CoA + S-adenosyl-L-methionine + H2O = 5-(carboxymethyl)uridine(34) in tRNA + 5'-deoxyadenosine + L-methionine + CoA + 2 H(+). It functions in the pathway tRNA modification; 5-methoxycarbonylmethyl-2-thiouridine-tRNA biosynthesis. Catalytic tRNA acetyltransferase subunit of the elongator complex, which is required for multiple tRNA modifications, including mcm5U (5-methoxycarbonylmethyl uridine), mcm5s2U (5-methoxycarbonylmethyl-2-thiouridine), and ncm5U (5-carbamoylmethyl uridine). In the elongator complex, acts as a tRNA uridine(34) acetyltransferase by mediating formation of carboxymethyluridine in the wobble base at position 34 in tRNAs. Binding by the elongator complex stabilizes microtubules and promotes their growth. This induces central spindle asymmetry, promoting polarized signaling endosome trafficking during asymmetric cell division and cell fate assignation of sensory organ precursor cells. Plays a role in the control of synaptic bouton expansion. Required for larval development. Involved in protein synthesis-dependent long-term memory formation, probably as part of the elongator complex. This Drosophila melanogaster (Fruit fly) protein is Elongator complex protein 3.